Here is a 618-residue protein sequence, read N- to C-terminus: Proline--tRNA ligase (618 aa).

This sequence belongs to the class-II aminoacyl-tRNA synthetase family. ProS type 1 subfamily. As to quaternary structure, homodimer.

It is found in the cytoplasm. It carries out the reaction tRNA(Pro) + L-proline + ATP = L-prolyl-tRNA(Pro) + AMP + diphosphate. Catalyzes the attachment of proline to tRNA(Pro) in a two-step reaction: proline is first activated by ATP to form Pro-AMP and then transferred to the acceptor end of tRNA(Pro). As ProRS can inadvertently accommodate and process non-cognate amino acids such as alanine and cysteine, to avoid such errors it has two additional distinct editing activities against alanine. One activity is designated as 'pretransfer' editing and involves the tRNA(Pro)-independent hydrolysis of activated Ala-AMP. The other activity is designated 'posttransfer' editing and involves deacylation of mischarged Ala-tRNA(Pro). The misacylated Cys-tRNA(Pro) is not edited by ProRS. The polypeptide is Proline--tRNA ligase (Streptococcus equi subsp. zooepidemicus (strain H70)).